The following is a 141-amino-acid chain: Hemoglobin subunit alpha-1/2 (141 aa).

One can recognise a Globin domain in the interval 1–141 (VLSPADKKNV…VSTVLTSKYR (141 aa)). Position 3 is a phosphoserine (serine 3). Lysine 7 and lysine 11 each carry N6-succinyllysine. Residue lysine 16 is modified to N6-acetyllysine; alternate. N6-succinyllysine; alternate is present on lysine 16. Tyrosine 24 bears the Phosphotyrosine mark. At serine 35 the chain carries Phosphoserine. The residue at position 40 (lysine 40) is an N6-succinyllysine. A Phosphoserine modification is found at serine 49. Histidine 58 provides a ligand contact to O2. A heme b-binding site is contributed by histidine 87. Serine 102 bears the Phosphoserine mark. A Phosphothreonine modification is found at threonine 108. Serine 124 and serine 131 each carry phosphoserine. Phosphothreonine occurs at positions 134 and 137. Position 138 is a phosphoserine (serine 138).

The protein belongs to the globin family. Heterotetramer of two alpha chains and two beta chains. In terms of tissue distribution, red blood cells.

Involved in oxygen transport from the lung to the various peripheral tissues. In Mandrillus sphinx (Mandrill), this protein is Hemoglobin subunit alpha-1/2.